The primary structure comprises 381 residues: NAD-dependent methanol dehydrogenase (381 aa).

It belongs to the iron-containing alcohol dehydrogenase family. In terms of assembly, homodecamer. It depends on Mg(2+) as a cofactor. Zn(2+) is required as a cofactor.

The protein localises to the cytoplasm. The enzyme catalyses methanol + NAD(+) = formaldehyde + NADH + H(+). It functions in the pathway one-carbon metabolism; methanol degradation; formaldehyde from methanol: step 1/1. Stimulated by the activator protein Act which requires the presence of magnesium ions. Inhibited by 1,10-phenanthroline. Functionally, catalyzes the oxidation of methanol to yield formaldehyde. It possesses a NADH-dependent formaldehyde reductase activity and cannot use NADP. The protein is NAD-dependent methanol dehydrogenase of Bacillus methanolicus.